The chain runs to 267 residues: Hydrolase FUB4 (267 aa).

Active-site charge relay system residues include Ser-93, Asp-183, and His-243.

Belongs to the AB hydrolase 3 family.

The protein operates within mycotoxin biosynthesis. Its function is as follows. Hydrolase; part of the gene cluster that mediates the biosynthesis of fusaric acid, a mycotoxin with low to moderate toxicity to animals and humans, but with high phytotoxic properties. L-aspartate is suggested as fusaric acid amino acid precursor that is activated and further processed to O-acetyl-L-homoserine by cluster enzymes aspartate kinase FUB3 and homoserine O-acetyltransferase FUB5, as well as enzymes of the primary metabolism. The polyketide synthase (PKS) FUB1 generates the triketide trans-2-hexenal which is presumptively released by the hydrolase FUB4 and linked to the NRPS-bound amino acid precursor by NAD(P)-dependent dehydrogenase FUB6. FUB1, FUB4, and the non-canonical NRPS Fub8 may form an enzyme complex. Further processing of the NRPS-bound intermediate might be carried out by FUB6 and the sulfhydrylase FUB7, enabling a spontaneous electrocyclization to close the carbon backbone of fusaric acid. Dihydrofusaric acid is likely to be released via reduction by the thioester reductase (TR) domain of FUB8 whereupon the final oxidation to fusaric acid may (also) be performed by the FMN-dependent dehydrogenase FUB9. The sequence is that of Hydrolase FUB4 from Fusarium oxysporum f. sp. lycopersici (strain 4287 / CBS 123668 / FGSC 9935 / NRRL 34936) (Fusarium vascular wilt of tomato).